We begin with the raw amino-acid sequence, 39 residues long: Sarcotoxin-1C (39 aa).

Arg39 bears the Arginine amide mark.

The protein belongs to the cecropin family.

The protein localises to the secreted. Sarcotoxins, which are potent bactericidal proteins, are produced in response to injury. They are cytotoxic to both Gram-positive and Gram-negative bacteria. The sequence is that of Sarcotoxin-1C from Sarcophaga peregrina (Flesh fly).